A 42-amino-acid polypeptide reads, in one-letter code: Photosystem I reaction center subunit IX (42 aa).

A helical transmembrane segment spans residues 7-27 (YLSVAPVLSTLWFVALAGLLI).

Belongs to the PsaJ family.

Its subcellular location is the plastid. The protein resides in the chloroplast thylakoid membrane. In terms of biological role, may help in the organization of the PsaE and PsaF subunits. This chain is Photosystem I reaction center subunit IX, found in Atropa belladonna (Belladonna).